A 438-amino-acid chain; its full sequence is 26S proteasome regulatory subunit 6A (438 aa).

Residues 1–24 (MSTLEELDALDQSQQGGSSNNEGL) are disordered. The span at 11 to 22 (DQSQQGGSSNNE) shows a compositional bias: polar residues. Residue 226-233 (GPPGTGKT) participates in ATP binding.

Belongs to the AAA ATPase family.

It is found in the cytoplasm. The protein localises to the nucleus. The 26S proteasome is involved in the ATP-dependent degradation of ubiquitinated proteins. The regulatory (or ATPase) complex confers ATP dependency and substrate specificity to the 26S complex. This Schizosaccharomyces pombe (strain 972 / ATCC 24843) (Fission yeast) protein is 26S proteasome regulatory subunit 6A (tbp1).